The sequence spans 415 residues: Gamma-glutamyl phosphate reductase (415 aa).

Belongs to the gamma-glutamyl phosphate reductase family.

It is found in the cytoplasm. It carries out the reaction L-glutamate 5-semialdehyde + phosphate + NADP(+) = L-glutamyl 5-phosphate + NADPH + H(+). Its pathway is amino-acid biosynthesis; L-proline biosynthesis; L-glutamate 5-semialdehyde from L-glutamate: step 2/2. Catalyzes the NADPH-dependent reduction of L-glutamate 5-phosphate into L-glutamate 5-semialdehyde and phosphate. The product spontaneously undergoes cyclization to form 1-pyrroline-5-carboxylate. This Lachnospira eligens (strain ATCC 27750 / DSM 3376 / VPI C15-48 / C15-B4) (Eubacterium eligens) protein is Gamma-glutamyl phosphate reductase.